The sequence spans 118 residues: Small ribosomal subunit protein uS13 (118 aa).

Residues Ser-94–Lys-118 are disordered.

It belongs to the universal ribosomal protein uS13 family. In terms of assembly, part of the 30S ribosomal subunit. Forms a loose heterodimer with protein S19. Forms two bridges to the 50S subunit in the 70S ribosome.

Functionally, located at the top of the head of the 30S subunit, it contacts several helices of the 16S rRNA. In the 70S ribosome it contacts the 23S rRNA (bridge B1a) and protein L5 of the 50S subunit (bridge B1b), connecting the 2 subunits; these bridges are implicated in subunit movement. Contacts the tRNAs in the A and P-sites. This Shewanella violacea (strain JCM 10179 / CIP 106290 / LMG 19151 / DSS12) protein is Small ribosomal subunit protein uS13.